Consider the following 176-residue polypeptide: Ribosome maturation factor RimM (176 aa).

Positions 95–169 (EDEVYLFELE…TARIAPPPGL (75 aa)) constitute a PRC barrel domain.

It belongs to the RimM family. In terms of assembly, binds ribosomal protein uS19.

Its subcellular location is the cytoplasm. Its function is as follows. An accessory protein needed during the final step in the assembly of 30S ribosomal subunit, possibly for assembly of the head region. Essential for efficient processing of 16S rRNA. May be needed both before and after RbfA during the maturation of 16S rRNA. It has affinity for free ribosomal 30S subunits but not for 70S ribosomes. In Nitratidesulfovibrio vulgaris (strain ATCC 29579 / DSM 644 / CCUG 34227 / NCIMB 8303 / VKM B-1760 / Hildenborough) (Desulfovibrio vulgaris), this protein is Ribosome maturation factor RimM.